Reading from the N-terminus, the 455-residue chain is MSKPQQQSPPSTTTTSPPPPPPSTPPPASSSRSLLSALRRSPVTTLVAAFFLLALFMYGEDVRTLAELSIDDYLYPDADFYNVSALPPLLLPPPTCDLSRGRWVFDNTSLPAYREKECTFLTKQVSCLANGRPDDLWQYWRWQPNNCSLPTFDARRFMEKMRGKRMMFVGDSLNRNQWESLVCLVQPILSKGRKKIVKRGSFNIFYAKEYRATLEFYWAPFLVESNSDNPNFHHIDQRIISPERIESHANNWKDVDYLIFNTYIWWMNNEDIKVRRPNSTSWSDHDEVPRIETYGRVFKTWSTWLEQNVDPARTSVFFMTISPLHNSPAQWGNPNGIKCVKETLPVLNYTKPLDLNHDMRMYDLVAKVAKNMKNVPVSLIDITRMSDYRKDAHTSLYSIRQGKLLTPEQKADPQKYADCIHWCLPGVPDVWNQILYTRILSKSSPPSTHPSLPPQ.

The segment covering 1–15 (MSKPQQQSPPSTTTT) has biased composition (low complexity). The disordered stretch occupies residues 1 to 32 (MSKPQQQSPPSTTTTSPPPPPPSTPPPASSSR). The Cytoplasmic segment spans residues 1-42 (MSKPQQQSPPSTTTTSPPPPPPSTPPPASSSRSLLSALRRSP). Pro residues predominate over residues 16–28 (SPPPPPPSTPPPA). A helical; Signal-anchor for type II membrane protein membrane pass occupies residues 43 to 59 (VTTLVAAFFLLALFMYG). Topologically, residues 60 to 455 (EDVRTLAELS…PSTHPSLPPQ (396 aa)) are lumenal. Asn-82, Asn-107, and Asn-146 each carry an N-linked (GlcNAc...) asparagine glycan. Intrachain disulfides connect Cys-96–Cys-147, Cys-118–Cys-183, Cys-127–Cys-423, and Cys-339–Cys-419. Residues 170–172 (GDS) carry the GDS motif motif. The Nucleophile role is filled by Ser-172. 2 N-linked (GlcNAc...) asparagine glycosylation sites follow: Asn-278 and Asn-348. Asp-418 acts as the Proton donor in catalysis. Residues 418–421 (DCIH) carry the DXXH motif motif. Residue His-421 is the Proton acceptor of the active site.

This sequence belongs to the PC-esterase family. TBL subfamily. Highly expressed in leaves. Expressed in roots, stems and inflorescences.

It localises to the golgi apparatus membrane. In terms of biological role, xylan acetyltransferase required for 2-O- and 3-O-monoacetylation of xylosyl residues in xylan. Catalyzes the 2-O-acetylation of xylan, followed by nonenzymatic acetyl migration to the O-3 position, resulting in products that are monoacetylated at both O-2 and O-3 positions. This chain is Xylan O-acetyltransferase 3, found in Oryza sativa subsp. japonica (Rice).